The following is a 422-amino-acid chain: MDKIVIEGGVPLRGSVDVSGAKNAALPVIAAALLAEGEHEVRNVPDLADVRTLGKLLGHMGCEVARGEGDRRTVRLRVPAAVAPEAPYELVKTMRASVLVLGPLLARLGRARVSLPGGCAIGARPIDQHLKALTALGAEIRIEHGYVNATVPRGRLRGTVFTFDAQTVTGTENVMMAAALAEGETVLRNCAREPEVKDLGDALVAMGALVEGAGTDEIWIEGVPSLRPLSHAVIPDRIEAGTFLVAGALPGNDVTVRGCVAAHQEALVEKLRAVGAEVTKVEGGLRVVGDGRPRPVDVRTAPHPGFPTDMQAQLMVLLCLADGTSRITETVFENRFMHVQELIRLGAHVEVDGRVAMVKGVPELSGAPVMASDLRASAALVLAGLAASGTTEVLRVYHLDRGYERIEEKLAPLGARIRRVRG.

22 to 23 (KN) serves as a coordination point for phosphoenolpyruvate. Residue arginine 95 participates in UDP-N-acetyl-alpha-D-glucosamine binding. The Proton donor role is filled by cysteine 119. Cysteine 119 bears the 2-(S-cysteinyl)pyruvic acid O-phosphothioketal mark. UDP-N-acetyl-alpha-D-glucosamine-binding positions include 124–128 (RPIDQ), aspartate 309, and valine 331.

It belongs to the EPSP synthase family. MurA subfamily.

It is found in the cytoplasm. The catalysed reaction is phosphoenolpyruvate + UDP-N-acetyl-alpha-D-glucosamine = UDP-N-acetyl-3-O-(1-carboxyvinyl)-alpha-D-glucosamine + phosphate. The protein operates within cell wall biogenesis; peptidoglycan biosynthesis. In terms of biological role, cell wall formation. Adds enolpyruvyl to UDP-N-acetylglucosamine. This Anaeromyxobacter sp. (strain K) protein is UDP-N-acetylglucosamine 1-carboxyvinyltransferase.